Here is a 258-residue protein sequence, read N- to C-terminus: Ribonuclease PH (258 aa).

Phosphate contacts are provided by residues R88 and 126 to 128; that span reads GTR.

This sequence belongs to the RNase PH family. Homohexameric ring arranged as a trimer of dimers.

The enzyme catalyses tRNA(n+1) + phosphate = tRNA(n) + a ribonucleoside 5'-diphosphate. Functionally, phosphorolytic 3'-5' exoribonuclease that plays an important role in tRNA 3'-end maturation. Removes nucleotide residues following the 3'-CCA terminus of tRNAs; can also add nucleotides to the ends of RNA molecules by using nucleoside diphosphates as substrates, but this may not be physiologically important. Probably plays a role in initiation of 16S rRNA degradation (leading to ribosome degradation) during starvation. The chain is Ribonuclease PH from Mycobacteroides abscessus (strain ATCC 19977 / DSM 44196 / CCUG 20993 / CIP 104536 / JCM 13569 / NCTC 13031 / TMC 1543 / L948) (Mycobacterium abscessus).